The primary structure comprises 134 residues: Large ribosomal subunit protein uL22 (134 aa).

Belongs to the universal ribosomal protein uL22 family. Part of the 50S ribosomal subunit.

Functionally, this protein binds specifically to 23S rRNA; its binding is stimulated by other ribosomal proteins, e.g. L4, L17, and L20. It is important during the early stages of 50S assembly. It makes multiple contacts with different domains of the 23S rRNA in the assembled 50S subunit and ribosome. Its function is as follows. The globular domain of the protein is located near the polypeptide exit tunnel on the outside of the subunit, while an extended beta-hairpin is found that lines the wall of the exit tunnel in the center of the 70S ribosome. The protein is Large ribosomal subunit protein uL22 of Karelsulcia muelleri (strain GWSS) (Sulcia muelleri).